We begin with the raw amino-acid sequence, 180 residues long: Inner membrane-spanning protein YciB (180 aa).

5 helical membrane-spanning segments follow: residues Q25–I45, V49–I69, I76–I96, I118–V138, and F150–L170.

It belongs to the YciB family.

It is found in the cell inner membrane. Its function is as follows. Plays a role in cell envelope biogenesis, maintenance of cell envelope integrity and membrane homeostasis. In Rickettsia prowazekii (strain Madrid E), this protein is Inner membrane-spanning protein YciB.